A 313-amino-acid chain; its full sequence is HTH-type transcriptional regulator CbbR (313 aa).

The region spanning Met-1–Thr-61 is the HTH lysR-type domain. A DNA-binding region (H-T-H motif) is located at residues Ile-21 to Gln-40.

It belongs to the LysR transcriptional regulatory family.

Transcriptional activator for the cbb operon for RuBisCO and other Calvin cycle genes. This chain is HTH-type transcriptional regulator CbbR (cbbR), found in Rhizobium meliloti (strain 1021) (Ensifer meliloti).